Consider the following 356-residue polypeptide: Probable cinnamyl alcohol dehydrogenase (356 aa).

Cys-47 is a Zn(2+) binding site. Ser-49 contributes to the NADP(+) binding site. Zn(2+) is bound by residues His-69, Glu-70, Cys-100, Cys-103, Cys-106, Cys-114, and Cys-163. Residues Thr-167, 188-193 (GLGGVG), 211-216 (SSSDKK), Thr-251, Gly-275, and 298-300 (SFI) each bind NADP(+).

Belongs to the zinc-containing alcohol dehydrogenase family. In terms of assembly, homodimer. Requires Zn(2+) as cofactor.

The enzyme catalyses (E)-cinnamyl alcohol + NADP(+) = (E)-cinnamaldehyde + NADPH + H(+). It catalyses the reaction (E)-coniferol + NADP(+) = (E)-coniferaldehyde + NADPH + H(+). It carries out the reaction (E)-sinapyl alcohol + NADP(+) = (E)-sinapaldehyde + NADPH + H(+). The catalysed reaction is (E)-4-coumaroyl alcohol + NADP(+) = (E)-4-coumaraldehyde + NADPH + H(+). The enzyme catalyses (E)-caffeyl alcohol + NADP(+) = (E)-caffeyl aldehyde + NADPH + H(+). It functions in the pathway aromatic compound metabolism; phenylpropanoid biosynthesis. In terms of biological role, involved in lignin biosynthesis. Catalyzes the final step specific for the production of lignin monomers. Catalyzes the NADPH-dependent reduction of coniferaldehyde, 5-hydroxyconiferaldehyde, sinapaldehyde, 4-coumaraldehyde and caffeyl aldehyde to their respective alcohols. The sequence is that of Probable cinnamyl alcohol dehydrogenase (CAD) from Eucalyptus globulus (Tasmanian blue gum).